We begin with the raw amino-acid sequence, 239 residues long: MATPHINAEMGDFADVVLMPGDPLRAKHIAETFLEDVREVNNVRGMLGFTGTYKGRKISVMGHGMGIPSCSIYTKELITDFGVKKIIRVGSCGAVRMDVKLRDVVIGMGACTDSKVNRIRFKDHDFAAIADFDMVRNAVDAAKALGVDARVGNLFSADLFYSPDGEMFDVMEKYGVLGVEMEAAGIYGVAAEFGAKALTICTVSDHIRTHEQTTAAERQTTFNDMIKIALESVLLGDQE.

His5 contributes to the a purine D-ribonucleoside binding site. Residues Gly21, Arg25, Arg44, and 88-91 (RVGS) contribute to the phosphate site. A purine D-ribonucleoside contacts are provided by residues 180–182 (EME) and 204–205 (SD). Asp205 acts as the Proton donor in catalysis.

The protein belongs to the PNP/UDP phosphorylase family. As to quaternary structure, homohexamer; trimer of homodimers.

It carries out the reaction a purine D-ribonucleoside + phosphate = a purine nucleobase + alpha-D-ribose 1-phosphate. It catalyses the reaction a purine 2'-deoxy-D-ribonucleoside + phosphate = a purine nucleobase + 2-deoxy-alpha-D-ribose 1-phosphate. In terms of biological role, catalyzes the reversible phosphorolytic breakdown of the N-glycosidic bond in the beta-(deoxy)ribonucleoside molecules, with the formation of the corresponding free purine bases and pentose-1-phosphate. This Salmonella choleraesuis (strain SC-B67) protein is Purine nucleoside phosphorylase DeoD-type.